A 912-amino-acid polypeptide reads, in one-letter code: Phosphatidylinositol-3-phosphatase SAC1 (912 aa).

The tract at residues 1–29 (MAKSENSTTSTFSSFANKIQPSNDAESDP) is disordered. In terms of domain architecture, SAC spans 173 to 575 (LSSVDLTKDF…GDALAQQYGG (403 aa)). A Phosphatase catalytic core motif is present at residues 511 to 522 (RTNCIDCLDRTN). The required for subcellular localization stretch occupies residues 715 to 912 (RPGGNTGSTG…VGDDKVPKVI (198 aa)). The interval 740 to 766 (LFGSRKPEESSSATKSGADDSEKGVTS) is disordered.

In terms of assembly, component of the PI(3,5)P2 regulatory complex at least composed of ATG18, SAC/FIG4, FAB1 and VAC14. Mg(2+) is required as a cofactor. In terms of tissue distribution, ubiquitous with higher expression level in both young elongating and nonelongating stems. Detected in vascular tissues.

It is found in the vacuole membrane. It localises to the golgi apparatus. The catalysed reaction is a 1,2-diacyl-sn-glycero-3-phospho-(1D-myo-inositol-3-phosphate) + H2O = a 1,2-diacyl-sn-glycero-3-phospho-(1D-myo-inositol) + phosphate. The enzyme catalyses a 1,2-diacyl-sn-glycero-3-phospho-(1D-myo-inositol-3,5-bisphosphate) + H2O = a 1,2-diacyl-sn-glycero-3-phospho-(1D-myo-inositol-3-phosphate) + phosphate. It carries out the reaction a 1,2-diacyl-sn-glycero-3-phospho-(1D-myo-inositol 4-phosphate) + H2O = a 1,2-diacyl-sn-glycero-3-phospho-(1D-myo-inositol) + phosphate. In terms of biological role, phosphoinositide phosphatase which catalyzes the hydrolysis of phosphatidylinositol-3,5-bisphosphate (PtdIns(3,5)P2). Can also catalyze the hydrolysis of phosphatidylinositol 3-phosphate (PtdIns(3)P) and phosphatidylinositol 4-phosphate (PtdIns(4)P). Required for normal cell morphogenesis, cell wall synthesis, and actin organization. The polypeptide is Phosphatidylinositol-3-phosphatase SAC1 (SAC1) (Arabidopsis thaliana (Mouse-ear cress)).